A 365-amino-acid polypeptide reads, in one-letter code: Spermidine/putrescine import ATP-binding protein PotA (365 aa).

Residues 7–237 (LTLADITKRF…PNNLFVASFI (231 aa)) form the ABC transporter domain. An ATP-binding site is contributed by 39 to 46 (GPSGCGKT).

The protein belongs to the ABC transporter superfamily. Spermidine/putrescine importer (TC 3.A.1.11.1) family. In terms of assembly, the complex is composed of two ATP-binding proteins (PotA), two transmembrane proteins (PotB and PotC) and a solute-binding protein (PotD).

Its subcellular location is the cell inner membrane. The enzyme catalyses ATP + H2O + polyamine-[polyamine-binding protein]Side 1 = ADP + phosphate + polyamineSide 2 + [polyamine-binding protein]Side 1.. Functionally, part of the ABC transporter complex PotABCD involved in spermidine/putrescine import. Responsible for energy coupling to the transport system. The sequence is that of Spermidine/putrescine import ATP-binding protein PotA from Hahella chejuensis (strain KCTC 2396).